Here is a 111-residue protein sequence, read N- to C-terminus: RNA polymerase-binding protein RbpA (111 aa).

This sequence belongs to the RNA polymerase-binding protein RbpA family. As to quaternary structure, forms a complex with the RNAP catalytic core and with free principal sigma factors.

In terms of biological role, binds to RNA polymerase (RNAP), stimulating transcription from principal, but not alternative sigma factor promoters. The sequence is that of RNA polymerase-binding protein RbpA from Mycobacterium tuberculosis (strain CDC 1551 / Oshkosh).